A 521-amino-acid polypeptide reads, in one-letter code: Bacillolysin (521 aa).

An N-terminal signal peptide occupies residues 1–27 (MGLGKKLSVAVAASFMSLSISLPGVQA). The propeptide at 28 to 221 (AEGHQLKENQ…ILKQQNKVEH (194 aa)) is activation peptide. Residue Asp-360 participates in Ca(2+) binding. His-364 is a Zn(2+) binding site. Glu-365 is a catalytic residue. Positions 368 and 388 each coordinate Zn(2+). Ca(2+) contacts are provided by Asp-399, Asp-402, Asp-404, and Glu-407. The Proton donor role is filled by His-449.

The protein belongs to the peptidase M4 family. Ca(2+) is required as a cofactor. Requires Zn(2+) as cofactor.

The protein localises to the secreted. It carries out the reaction Similar, but not identical, to that of thermolysin.. Extracellular zinc metalloprotease. This is Bacillolysin (nprE) from Bacillus subtilis subsp. amylosacchariticus.